The following is a 116-amino-acid chain: Helper of Tim protein 13 (116 aa).

The CHY-type; degenerate zinc-finger motif lies at 10-94 (TVDDQSRCVH…SNLICPNCRS (85 aa)). Residues Cys17, His19, Cys40, Cys43, Cys68, Cys71, Cys89, and Cys92 each coordinate Zn(2+).

Interacts with the small Tim proteins TIM8, TIM9, TIM10, TIM12, and TIM13.

It is found in the mitochondrion intermembrane space. Its subcellular location is the mitochondrion membrane. In terms of biological role, required for the assembly or recycling of the small Tim proteins in the mitochondrial intermembrane, thereby participating in the import and insertion of multi-pass transmembrane proteins into the mitochondrial inner membrane. Probably acts by facilitating the formation of disulfide bonds in small Tim proteins. This chain is Helper of Tim protein 13 (HOT13), found in Saccharomyces cerevisiae (strain ATCC 204508 / S288c) (Baker's yeast).